A 349-amino-acid polypeptide reads, in one-letter code: Sphingolipid C4-hydroxylase SUR2 (349 aa).

Helical transmembrane passes span 9–29, 50–70, 99–119, 148–168, and 209–229; these read AAGS…MHYA, VLAL…FHVI, FLEV…FMHF, IYYG…FLFV, and PVEG…LTHL. One can recognise a Fatty acid hydroxylase domain in the interval 162-297; that stretch reads FAGFLFVDTW…FTFWDNLFQT (136 aa).

Belongs to the sterol desaturase family.

The protein localises to the endoplasmic reticulum membrane. The enzyme catalyses sphinganine + 2 Fe(II)-[cytochrome b5] + O2 + 2 H(+) = (4R)-hydroxysphinganine + 2 Fe(III)-[cytochrome b5] + H2O. It catalyses the reaction an N-acylsphinganine + 2 Fe(II)-[cytochrome b5] + O2 + 2 H(+) = an N-acyl-(4R)-4-hydroxysphinganine + 2 Fe(III)-[cytochrome b5] + H2O. The catalysed reaction is an N-acyleicosasphinganine + 2 Fe(II)-[cytochrome b5] + O2 + 2 H(+) = N-acyl-4-hydroxyeicosasphinganine + 2 Fe(III)-[cytochrome b5] + H2O. It participates in membrane lipid metabolism; sphingolipid biosynthesis. In terms of biological role, required for hydroxylation of C-4 in the sphingoid moiety of ceramide. Catalyzes the conversion of sphinganine to phytosphingosine in sphingolipid biosynthesis. Involved in the response to syringomycin. The chain is Sphingolipid C4-hydroxylase SUR2 (SUR2) from Saccharomyces cerevisiae (strain ATCC 204508 / S288c) (Baker's yeast).